A 210-amino-acid chain; its full sequence is Uridine kinase (210 aa).

An ATP-binding site is contributed by 12–19 (GGSGSGKT).

This sequence belongs to the uridine kinase family.

Its subcellular location is the cytoplasm. It carries out the reaction uridine + ATP = UMP + ADP + H(+). It catalyses the reaction cytidine + ATP = CMP + ADP + H(+). The protein operates within pyrimidine metabolism; CTP biosynthesis via salvage pathway; CTP from cytidine: step 1/3. It participates in pyrimidine metabolism; UMP biosynthesis via salvage pathway; UMP from uridine: step 1/1. This chain is Uridine kinase, found in Leuconostoc citreum (strain KM20).